The sequence spans 499 residues: Glycerol kinase (499 aa).

ADP is bound at residue Thr-13. The ATP site is built by Thr-13, Thr-14, and Ser-15. Residue Thr-13 participates in sn-glycerol 3-phosphate binding. Arg-17 provides a ligand contact to ADP. Sn-glycerol 3-phosphate-binding residues include Arg-83, Glu-84, Tyr-135, and Asp-245. Glycerol is bound by residues Arg-83, Glu-84, Tyr-135, Asp-245, and Gln-246. Residues Thr-267 and Gly-310 each contribute to the ADP site. ATP contacts are provided by Thr-267, Gly-310, Gln-314, and Gly-411. ADP-binding residues include Gly-411 and Asn-415.

Belongs to the FGGY kinase family.

It catalyses the reaction glycerol + ATP = sn-glycerol 3-phosphate + ADP + H(+). The protein operates within polyol metabolism; glycerol degradation via glycerol kinase pathway; sn-glycerol 3-phosphate from glycerol: step 1/1. Inhibited by fructose 1,6-bisphosphate (FBP). In terms of biological role, key enzyme in the regulation of glycerol uptake and metabolism. Catalyzes the phosphorylation of glycerol to yield sn-glycerol 3-phosphate. The protein is Glycerol kinase of Xanthomonas campestris pv. campestris (strain 8004).